A 290-amino-acid chain; its full sequence is Acetyl-coenzyme A carboxylase carboxyl transferase subunit beta (290 aa).

The CoA carboxyltransferase N-terminal domain maps to 28–290; it reads LMNKCSKCGT…TVREGLSHGG (263 aa). Residues cysteine 32, cysteine 35, cysteine 51, and cysteine 54 each coordinate Zn(2+). Residues 32–54 form a C4-type zinc finger; sequence CSKCGTIQYSKELDKNLKVCSSC.

The protein belongs to the AccD/PCCB family. Acetyl-CoA carboxylase is a heterohexamer composed of biotin carboxyl carrier protein (AccB), biotin carboxylase (AccC) and two subunits each of ACCase subunit alpha (AccA) and ACCase subunit beta (AccD). Zn(2+) serves as cofactor.

It localises to the cytoplasm. The catalysed reaction is N(6)-carboxybiotinyl-L-lysyl-[protein] + acetyl-CoA = N(6)-biotinyl-L-lysyl-[protein] + malonyl-CoA. It participates in lipid metabolism; malonyl-CoA biosynthesis; malonyl-CoA from acetyl-CoA: step 1/1. Its function is as follows. Component of the acetyl coenzyme A carboxylase (ACC) complex. Biotin carboxylase (BC) catalyzes the carboxylation of biotin on its carrier protein (BCCP) and then the CO(2) group is transferred by the transcarboxylase to acetyl-CoA to form malonyl-CoA. The chain is Acetyl-coenzyme A carboxylase carboxyl transferase subunit beta from Paenibacillus sp. (strain JDR-2).